A 463-amino-acid polypeptide reads, in one-letter code: MGSKTPDGHRQGPNESSTGGTIAVLNPPKSASASGLVQDASGEDDEDGDDDEEKAGTDLNSRAQPNNDGKKRKRKNNKKKKKKRPLSGQQTTPPRVALSSIFSGQRYPEGEIVKYVTNDDNLQRTTAEELRHLSVVNNMDDTFLSDYRQAAEVHRQVRRYVQTIAKPGISMSELAQEIEDGVRALTGHQGIETGDALKAGLAFPTGLCLNNVAAHWTPNPGTKEVILGHDDVLKIDFGVHVHGRIVDSAFTVAFNPVYDNLLTAVRAATNTGLKEAGIDARIDHISGEIQEVMESYEVEINGNLIPVKALRSLSGHNILRYKIHGEKQVPFVKSKTTQRMEEGDVFAIETFGSTGKGYTRDEAGVYGYGLNEHVSATGLRHASAKSLLKTIRENFGTLVFSRRYLEHMGVKNYHLGMRSLISNDIVECYAPLVDVPGSYVAQFEHTVLLRPNCKEVISRGDDY.

A compositionally biased stretch (basic and acidic residues) spans 1–12 (MGSKTPDGHRQG). The disordered stretch occupies residues 1 to 96 (MGSKTPDGHR…SGQQTTPPRV (96 aa)). Acidic residues predominate over residues 41-53 (SGEDDEDGDDDEE). The span at 58-67 (DLNSRAQPNN) shows a compositional bias: polar residues. Residues 70 to 85 (KKRKRKNNKKKKKKRP) show a composition bias toward basic residues. Residue His215 coordinates substrate. Residues Asp236, Asp247, and His316 each coordinate a divalent metal cation. A substrate-binding site is contributed by His324. A divalent metal cation is bound by residues Glu349 and Glu444.

Belongs to the peptidase M24A family. Methionine aminopeptidase eukaryotic type 2 subfamily. Requires Co(2+) as cofactor. It depends on Zn(2+) as a cofactor. Mn(2+) serves as cofactor. The cofactor is Fe(2+).

It localises to the cytoplasm. The enzyme catalyses Release of N-terminal amino acids, preferentially methionine, from peptides and arylamides.. In terms of biological role, cotranslationally removes the N-terminal methionine from nascent proteins. The N-terminal methionine is often cleaved when the second residue in the primary sequence is small and uncharged (Met-Ala-, Cys, Gly, Pro, Ser, Thr, or Val). The sequence is that of Methionine aminopeptidase 2-1 from Arthroderma otae (strain ATCC MYA-4605 / CBS 113480) (Microsporum canis).